The chain runs to 681 residues: Chaperone protein HtpG (681 aa).

Residues 1–326 (MQKGNIGVTT…SPDIPLNVSR (326 aa)) form an a; substrate-binding region. A b region spans residues 327 to 545 (SYLQSDSNVK…YMRRMKEMAN (219 aa)). Residues 546–681 (IQAGMSFYGE…NFVKRSIELI (136 aa)) form a c region. A disordered region spans residues 589 to 620 (IQTEMNSVSKRRNELKDSQKDKKEEDIPTAEK). The span at 599–620 (RRNELKDSQKDKKEEDIPTAEK) shows a compositional bias: basic and acidic residues.

Belongs to the heat shock protein 90 family. As to quaternary structure, homodimer.

The protein localises to the cytoplasm. Functionally, molecular chaperone. Has ATPase activity. This is Chaperone protein HtpG from Bacteroides thetaiotaomicron (strain ATCC 29148 / DSM 2079 / JCM 5827 / CCUG 10774 / NCTC 10582 / VPI-5482 / E50).